A 488-amino-acid chain; its full sequence is Solute carrier family 41 member 3 (488 aa).

2 stretches are compositionally biased toward basic and acidic residues: residues 1–19 (MEGTEARQRRLEGCGRLKE) and 27–36 (DAGRLPKASE). A disordered region spans residues 1–36 (MEGTEARQRRLEGCGRLKELGPLPSHDAGRLPKASE). 9 helical membrane passes run 63-83 (LIIGFQVVIPFLLAGVGLSWA), 147-167 (LAVVQVQATVVGLLAAVASLM), 189-209 (VITAFLAALALGILMICIVIG), 220-240 (IATPIAASLGDLITLSILALM), 251-271 (WYLTPLVCVGFLALTPLWLFI), 284-304 (YGWFPIILAMIISSFGGLILS), 377-397 (VLLFLVVPGHLIFFYLICLVE), 406-426 (IFILLYLVAGVVQVVILLYLA), and 450-470 (GLGDLLGTSLLALCFFLDWLL).

This sequence belongs to the SLC41A transporter family.

Its subcellular location is the mitochondrion inner membrane. It catalyses the reaction Mg(2+)(in) + 2 Na(+)(out) = Mg(2+)(out) + 2 Na(+)(in). Na(+)/Mg(2+) ion exchanger that acts as a predominant Mg(2+) efflux system at the mitochondrial inner membrane. The protein is Solute carrier family 41 member 3 (Slc41a3) of Mus musculus (Mouse).